The primary structure comprises 32 residues: Photosystem II reaction center protein Z (32 aa).

Residues 9-31 (FILIGSASWAALVLLVGSLNSFV) traverse the membrane as a helical segment.

The protein belongs to the PsbZ family. PSII is composed of 1 copy each of membrane proteins PsbA, PsbB, PsbC, PsbD, PsbE, PsbF, PsbH, PsbI, PsbJ, PsbK, PsbL, PsbM, PsbT, PsbY, PsbZ, Psb30/Ycf12, at least 3 peripheral proteins of the oxygen-evolving complex and a large number of cofactors. It forms dimeric complexes.

It localises to the plastid. It is found in the chloroplast thylakoid membrane. Functionally, may control the interaction of photosystem II (PSII) cores with the light-harvesting antenna, regulates electron flow through the 2 photosystem reaction centers. PSII is a light-driven water plastoquinone oxidoreductase, using light energy to abstract electrons from H(2)O, generating a proton gradient subsequently used for ATP formation. This is Photosystem II reaction center protein Z from Euglena viridis (Cercaria viridis).